The chain runs to 385 residues: Cellulase CelDZ1 (385 aa).

A helical transmembrane segment spans residues 6 to 26 (INKWYFFVGMLVIFAVIISLI). Residues His87, 91–92 (WF), Tyr118, and His153 contribute to the substrate site. Residue Glu192 is the Proton donor of the active site. Tyr261 lines the substrate pocket. Residue Glu294 is the Nucleophile of the active site. Residues 300-301 (AS), Trp328, and 333-335 (KNE) each bind substrate.

It belongs to the glycosyl hydrolase 5 (cellulase A) family. As to quaternary structure, monomer.

The protein localises to the cell membrane. The enzyme catalyses Endohydrolysis of (1-&gt;4)-beta-D-glucosidic linkages in cellulose, lichenin and cereal beta-D-glucans.. With respect to regulation, activity is enhanced by 1mM Mn(2+), but is not affected by 1mM Ca(2+), Mg(2+), Zn(2+), K(+), Na(+) or Li(+). Activity is not inhibited by EDTA (in vitro). Thermostable endoglucanase that has high activity with soluble polymeric substrates containing beta-1,4-glycosidic bonds, such as carboxymethyl cellulose (CMC) and barley beta-D-glucan (in vitro). Has no activity with cellobiose and filter paper. Has no activity with substrates containing beta-1,3-linked glycans, such as laminarin. Likewise, lacks activity with xylan, galactomannan and pectin. This chain is Cellulase CelDZ1, found in Thermoanaerobacterium sp.